A 127-amino-acid polypeptide reads, in one-letter code: uncharacterized protein (127 aa).

The N-terminal stretch at 1–23 (MAGVRARAPLPLALLLSLPAAPG) is a signal peptide. The disordered stretch occupies residues 43 to 127 (CFEVGLRKPP…ACPPRAPLWR (85 aa)). Over residues 59–70 (PPSFSSGSSRPL) the composition is skewed to low complexity.

The protein localises to the secreted. This is an uncharacterized protein from Homo sapiens (Human).